A 656-amino-acid chain; its full sequence is 1-deoxy-D-xylulose-5-phosphate synthase 1 (656 aa).

Thiamine diphosphate-binding positions include histidine 73 and 113–115 (SHA). Aspartate 144 contributes to the Mg(2+) binding site. Residues 145–146 (GA), asparagine 174, tyrosine 285, and glutamate 367 each bind thiamine diphosphate. Asparagine 174 contributes to the Mg(2+) binding site. A disordered region spans residues 625-656 (AGDRAGGPAVEQPGDGRMSGDGRIVMPAQGEN).

The protein belongs to the transketolase family. DXPS subfamily. In terms of assembly, homodimer. Requires Mg(2+) as cofactor. The cofactor is thiamine diphosphate.

It catalyses the reaction D-glyceraldehyde 3-phosphate + pyruvate + H(+) = 1-deoxy-D-xylulose 5-phosphate + CO2. It functions in the pathway metabolic intermediate biosynthesis; 1-deoxy-D-xylulose 5-phosphate biosynthesis; 1-deoxy-D-xylulose 5-phosphate from D-glyceraldehyde 3-phosphate and pyruvate: step 1/1. Catalyzes the acyloin condensation reaction between C atoms 2 and 3 of pyruvate and glyceraldehyde 3-phosphate to yield 1-deoxy-D-xylulose-5-phosphate (DXP). The polypeptide is 1-deoxy-D-xylulose-5-phosphate synthase 1 (Streptomyces coelicolor (strain ATCC BAA-471 / A3(2) / M145)).